Consider the following 153-residue polypeptide: Aspartate carbamoyltransferase regulatory chain (153 aa).

Zn(2+)-binding residues include Cys109, Cys114, Cys138, and Cys141.

It belongs to the PyrI family. Contains catalytic and regulatory chains. Requires Zn(2+) as cofactor.

Involved in allosteric regulation of aspartate carbamoyltransferase. This is Aspartate carbamoyltransferase regulatory chain from Shigella flexneri serotype 5b (strain 8401).